A 695-amino-acid polypeptide reads, in one-letter code: Nucleoprotein (695 aa).

Coiled coils occupy residues 316–341 and 372–399; these read VNVGEQYQQLREAAHDAEVKLQRRHE and QTLAVLSQKREKLARLAAEIENNIVEDQ. Residues 424-611 are disordered; sequence QARPMNRPTA…SPSAPQEDTR (188 aa). A compositionally biased stretch (basic and acidic residues) spans 438–447; the sequence is VDDKIEHEST. Composition is skewed to polar residues over residues 495 to 505 and 537 to 552; these read RQSQDLNNSQG and TTDSQESIDQPGSDNE. The PTAP/PSAP motif motif lies at 603–606; sequence PSAP.

Belongs to the filoviruses nucleoprotein family. In terms of assembly, homooligomer. Homomultimerizes to form the nucleocapsid. Binds to viral genomic RNA. Interacts with VP35 and VP30 to form the nucleocapsid. Also interacts with VP24 and VP40. Post-translationally, phosphorylated.

It localises to the virion. Its subcellular location is the host cytoplasm. Functionally, encapsidates the genome, protecting it from nucleases. The encapsidated genomic RNA is termed the nucleocapsid and serves as template for transcription and replication. During replication, encapsidation by NP is coupled to RNA synthesis and all replicative products are resistant to nucleases. This is Nucleoprotein (NP) from Chlorocebus aethiops (Green monkey).